The following is a 682-amino-acid chain: Pesticidal crystal protein Cry19Ba (682 aa).

It belongs to the delta endotoxin family.

Promotes colloidosmotic lysis by binding to the midgut epithelial cells of mosquitos. Has larvicidal activity against Culex pipiens molestus, but not to Anopheles stephensi. This chain is Pesticidal crystal protein Cry19Ba, found in Bacillus thuringiensis subsp. higo.